Reading from the N-terminus, the 495-residue chain is uncharacterized protein (495 aa).

Residues Ser-16, Glu-36, Trp-45, Asp-56, Tyr-62, and Val-105 each contribute to the FAD site.

Belongs to the FAD-binding monooxygenase family. Requires FAD as cofactor.

This is an uncharacterized protein from Mycobacterium tuberculosis (strain CDC 1551 / Oshkosh).